A 677-amino-acid chain; its full sequence is Bargin (677 aa).

Low complexity-rich tracts occupy residues 1 to 13 (MDRG…TPAV) and 29 to 39 (APHAAAGPDGQ). Disordered stretches follow at residues 1-39 (MDRG…PDGQ) and 168-190 (SQAT…HSHT). The region spanning 25–270 (EEAAAPHAAA…RENHGQADHS (246 aa)) is the BAR domain. Ser-183, Ser-270, and Ser-272 each carry phosphoserine. The Rho-GAP domain maps to 284–477 (VSLATHLQEL…ALIQSADTLF (194 aa)). The tract at residues 504–577 (SEELPSTAVP…DMARRSTGSL (74 aa)) is disordered. Pro residues predominate over residues 516–530 (ATTPAPAPAPAPAPA). Phosphoserine is present on residues Ser-552 and Ser-558. Positions 574–677 (TGSLAAAVET…IADLTEGLED (104 aa)) are mediates non-covalent binding of poly-ubiquitin chains.

As to expression, expressed in brain (at protein level).

Its subcellular location is the cell membrane. The protein resides in the cytoplasm. It localises to the cytosol. In terms of biological role, GTPase activating protein (GAP) which specifically converts GTP-bound RAC1 and CDC42 in their inactive GDP-bound form. The GAP activity is enhanced by the non-covalent binding of K-29 and K-48 polyubiquitin chains. This Homo sapiens (Human) protein is Bargin.